A 243-amino-acid polypeptide reads, in one-letter code: 1-(5-phosphoribosyl)-5-[(5-phosphoribosylamino)methylideneamino] imidazole-4-carboxamide isomerase (243 aa).

D8 functions as the Proton acceptor in the catalytic mechanism. The active-site Proton donor is the D130.

This sequence belongs to the HisA/HisF family.

It localises to the cytoplasm. It catalyses the reaction 1-(5-phospho-beta-D-ribosyl)-5-[(5-phospho-beta-D-ribosylamino)methylideneamino]imidazole-4-carboxamide = 5-[(5-phospho-1-deoxy-D-ribulos-1-ylimino)methylamino]-1-(5-phospho-beta-D-ribosyl)imidazole-4-carboxamide. Its pathway is amino-acid biosynthesis; L-histidine biosynthesis; L-histidine from 5-phospho-alpha-D-ribose 1-diphosphate: step 4/9. In Saccharophagus degradans (strain 2-40 / ATCC 43961 / DSM 17024), this protein is 1-(5-phosphoribosyl)-5-[(5-phosphoribosylamino)methylideneamino] imidazole-4-carboxamide isomerase.